The sequence spans 352 residues: Phenylalanine--tRNA ligase alpha subunit (352 aa).

E258 contributes to the Mg(2+) binding site.

It belongs to the class-II aminoacyl-tRNA synthetase family. Phe-tRNA synthetase alpha subunit type 1 subfamily. In terms of assembly, tetramer of two alpha and two beta subunits. Requires Mg(2+) as cofactor.

It is found in the cytoplasm. It catalyses the reaction tRNA(Phe) + L-phenylalanine + ATP = L-phenylalanyl-tRNA(Phe) + AMP + diphosphate + H(+). The sequence is that of Phenylalanine--tRNA ligase alpha subunit from Staphylococcus aureus (strain Mu3 / ATCC 700698).